A 306-amino-acid polypeptide reads, in one-letter code: Mitochondrial glycine transporter (306 aa).

Solcar repeat units follow at residues 25–114 (QPVI…LKQY), 121–205 (PTAL…TKNV), and 217–301 (LVPV…MMAK). 6 helical membrane-spanning segments follow: residues 31-56 (FLCG…TRLQ), 89-115 (GMSP…KQYF), 127-152 (VILG…TRYE), 180-203 (GLTA…SQTK), 221-247 (VNFS…KTHM), and 276-294 (GSVP…AWTV).

The protein belongs to the mitochondrial carrier (TC 2.A.29) family. SLC25A38 subfamily.

The protein localises to the mitochondrion inner membrane. The enzyme catalyses glycine(in) = glycine(out). Mitochondrial glycine transporter that imports glycine into the mitochondrial matrix. Plays an important role in providing glycine for the first enzymatic step in heme biosynthesis, the condensation of glycine with succinyl-CoA to produce 5-aminolevulinate (ALA) in the mitochondrial matrix. Required during erythropoiesis. Functionally, plays a role as pro-apoptotic protein that induces caspase-dependent apoptosis. The chain is Mitochondrial glycine transporter from Ovis aries (Sheep).